The primary structure comprises 3108 residues: Probable polyketide synthase 39 (3108 aa).

Residues 9–440 enclose the Ketosynthase family 3 (KS3) domain; sequence DDDVAVIGIG…GSNVCLILSE (432 aa). Active-site for beta-ketoacyl synthase activity residues include cysteine 181, histidine 320, and histidine 363. The tract at residues 643–676 is acyl/malonyl transferase; sequence GVSADIIIGHSLGEISSAYCSGMIDFQTLCYLTY. Serine 653 functions as the For acyl/malonyl transferase activity in the catalytic mechanism. The segment at 939-1068 is N-terminal hotdog fold; that stretch reads HEKIKSEGPS…GNFSLFKHNI (130 aa). In terms of domain architecture, PKS/mFAS DH spans 939–1265; that stretch reads HEKIKSEGPS…CTIAASNPDS (327 aa). Residue histidine 980 is the Proton acceptor; for dehydratase activity of the active site. A C-terminal hotdog fold region spans residues 1085–1265; sequence NFTSISKQDL…CTIAASNPDS (181 aa). Aspartate 1157 acts as the Proton donor; for dehydratase activity in catalysis. The interval 1375-1435 is disordered; sequence NNNNNNNNNN…NNNNNNNNNN (61 aa). Residues 2566–2643 form the Carrier domain; sequence GNNEIIHSTI…QSIEIIKSAL (78 aa). Serine 2603 bears the O-(pantetheine 4'-phosphoryl)serine mark. Residues 2702 to 2722 form a helical membrane-spanning segment; that stretch reads IFLTGSTGFLGAYLLMELIKM.

The cofactor is pantetheine 4'-phosphate.

The protein resides in the membrane. Its function is as follows. Probable polyketide synthase. The polypeptide is Probable polyketide synthase 39 (pks39) (Dictyostelium discoideum (Social amoeba)).